The sequence spans 489 residues: Glutamyl-tRNA(Gln) amidotransferase subunit A (489 aa).

Catalysis depends on charge relay system residues Lys78 and Ser153. Ser177 (acyl-ester intermediate) is an active-site residue.

It belongs to the amidase family. GatA subfamily. Heterotrimer of A, B and C subunits.

It catalyses the reaction L-glutamyl-tRNA(Gln) + L-glutamine + ATP + H2O = L-glutaminyl-tRNA(Gln) + L-glutamate + ADP + phosphate + H(+). Allows the formation of correctly charged Gln-tRNA(Gln) through the transamidation of misacylated Glu-tRNA(Gln) in organisms which lack glutaminyl-tRNA synthetase. The reaction takes place in the presence of glutamine and ATP through an activated gamma-phospho-Glu-tRNA(Gln). The chain is Glutamyl-tRNA(Gln) amidotransferase subunit A from Nitratidesulfovibrio vulgaris (strain DP4) (Desulfovibrio vulgaris).